The primary structure comprises 809 residues: Leucine--tRNA ligase (809 aa).

Residues 40–50 (PYPSGRIHMGH) carry the 'HIGH' region motif. A 'KMSKS' region motif is present at residues 579 to 583 (KMSKS). K582 contributes to the ATP binding site.

It belongs to the class-I aminoacyl-tRNA synthetase family.

It localises to the cytoplasm. The catalysed reaction is tRNA(Leu) + L-leucine + ATP = L-leucyl-tRNA(Leu) + AMP + diphosphate. This Campylobacter jejuni subsp. doylei (strain ATCC BAA-1458 / RM4099 / 269.97) protein is Leucine--tRNA ligase.